The sequence spans 68 residues: Large ribosomal subunit protein uL29 (68 aa).

The protein belongs to the universal ribosomal protein uL29 family.

This is Large ribosomal subunit protein uL29 from Rhodospirillum rubrum (strain ATCC 11170 / ATH 1.1.1 / DSM 467 / LMG 4362 / NCIMB 8255 / S1).